The sequence spans 425 residues: Perilipin-2 (425 aa).

Ala2 is modified (N-acetylalanine). Ser213 bears the Phosphoserine mark. Tyr230 bears the Phosphotyrosine mark.

This sequence belongs to the perilipin family. Interacts with IRGC. In terms of processing, acylated; primarily with C14, C16 and C18 fatty acids. Phosphorylation at Tyr-230 by isoform 1 of CHKA (CHKalpha2) promotes dissociation from lipid droplets: dissociation is followed by recruitment of autophagosome machinery to lipid droplets and subsequent lipid droplet lipolysis. Post-translationally, polyubiquitination of Nt-acetylatable A-PLIN2 by MARCHF6 lead to degradation by 26S proteasomes. In terms of tissue distribution, adipose tissue specific. Expressed abundantly and preferentially in fat pads.

Its subcellular location is the membrane. The protein localises to the lipid droplet. Functionally, structural component of lipid droplets, which is required for the formation and maintenance of lipid storage droplets. In Mus musculus (Mouse), this protein is Perilipin-2.